Reading from the N-terminus, the 455-residue chain is Glutamyl-tRNA reductase (455 aa).

Substrate is bound by residues 49 to 52, Ser-109, 114 to 116, and Gln-120; these read TCNR and ETQ. Catalysis depends on Cys-50, which acts as the Nucleophile. An NADP(+)-binding site is contributed by 189-194; the sequence is GAGKMG.

It belongs to the glutamyl-tRNA reductase family. In terms of assembly, homodimer.

It carries out the reaction (S)-4-amino-5-oxopentanoate + tRNA(Glu) + NADP(+) = L-glutamyl-tRNA(Glu) + NADPH + H(+). The protein operates within porphyrin-containing compound metabolism; protoporphyrin-IX biosynthesis; 5-aminolevulinate from L-glutamyl-tRNA(Glu): step 1/2. In terms of biological role, catalyzes the NADPH-dependent reduction of glutamyl-tRNA(Glu) to glutamate 1-semialdehyde (GSA). The chain is Glutamyl-tRNA reductase from Bacillus subtilis (strain 168).